A 353-amino-acid polypeptide reads, in one-letter code: Protein RecA (353 aa).

An ATP-binding site is contributed by 67–74; sequence GPESSGKT. The tract at residues 330–353 is disordered; sequence SNPNSTPDFSVDDSEGVAETNEDF. The span at 339 to 353 shows a compositional bias: acidic residues; the sequence is SVDDSEGVAETNEDF.

Belongs to the RecA family.

It is found in the cytoplasm. Its function is as follows. Can catalyze the hydrolysis of ATP in the presence of single-stranded DNA, the ATP-dependent uptake of single-stranded DNA by duplex DNA, and the ATP-dependent hybridization of homologous single-stranded DNAs. It interacts with LexA causing its activation and leading to its autocatalytic cleavage. The chain is Protein RecA from Shigella sonnei.